The following is a 135-amino-acid chain: Large ribosomal subunit protein uL16c (135 aa).

Basic residues predominate over residues Met1–Met17. Residues Met1–Ser22 form a disordered region.

This sequence belongs to the universal ribosomal protein uL16 family. As to quaternary structure, part of the 50S ribosomal subunit.

The protein resides in the plastid. Its subcellular location is the chloroplast. This is Large ribosomal subunit protein uL16c from Gracilaria tenuistipitata (Red alga).